The following is a 363-amino-acid chain: S-methylmethionine--homocysteine S-methyltransferase BHMT2 (363 aa).

Residues 11–305 (RGILERLESG…YHIRAIAEEL (295 aa)) enclose the Hcy-binding domain. Zn(2+)-binding residues include C208, C290, and C291. S321 bears the Phosphoserine mark.

As to quaternary structure, homotetramer. Zn(2+) is required as a cofactor.

It catalyses the reaction S-methyl-L-methionine + L-homocysteine = 2 L-methionine + H(+). It participates in amino-acid biosynthesis; L-methionine biosynthesis via de novo pathway; L-methionine from L-homocysteine (BhmT route): step 1/1. Functionally, involved in the regulation of homocysteine metabolism. Converts betaine and homocysteine to dimethylglycine and methionine, respectively. This reaction is also required for the irreversible oxidation of choline. The protein is S-methylmethionine--homocysteine S-methyltransferase BHMT2 (BHMT2) of Pongo abelii (Sumatran orangutan).